The sequence spans 255 residues: MFKVDLNSDLGESFGAYKMGMDEEILKFVSSVNVACGFHAGDPCVMDETLNLAKQNGVCIGAHPSYPDLLGFGRRNMQISFEEAKNYALYQLGALFGFAKAKGMKIQHFKAHGALYNMAAIDENLALALCEAVASFDENIIFLGLSNSAMNEAAKKKGLRYANEVFADRAYNDDGTLVSRKLEGALIHDENLAIKRVIKMIKESKVTSINGKEIDLKADSICVHGDNAKALEFVKKIKENLKKEQIQICALENFI.

It belongs to the LamB/PxpA family. As to quaternary structure, forms a complex composed of PxpA, PxpB and PxpC.

The catalysed reaction is 5-oxo-L-proline + ATP + 2 H2O = L-glutamate + ADP + phosphate + H(+). In terms of biological role, catalyzes the cleavage of 5-oxoproline to form L-glutamate coupled to the hydrolysis of ATP to ADP and inorganic phosphate. This is 5-oxoprolinase subunit A from Campylobacter jejuni subsp. jejuni serotype O:2 (strain ATCC 700819 / NCTC 11168).